Reading from the N-terminus, the 366-residue chain is Lipase member J (366 aa).

Catalysis depends on Ser-141, which acts as the Nucleophile. Active-site charge relay system residues include Asp-312 and His-341.

It belongs to the AB hydrolase superfamily. Lipase family.

The chain is Lipase member J (LIPJ) from Homo sapiens (Human).